Here is a 220-residue protein sequence, read N- to C-terminus: ATP-dependent dethiobiotin synthetase BioD (220 aa).

Position 13–18 (13–18) interacts with ATP; sequence EVGKTV. A Mg(2+)-binding site is contributed by threonine 17. Lysine 38 is a catalytic residue. Serine 42 provides a ligand contact to substrate. ATP-binding positions include aspartate 55, 116–119, 176–177, and asparagine 212; these read EGAG and NR. Aspartate 55 and glutamate 116 together coordinate Mg(2+).

This sequence belongs to the dethiobiotin synthetase family. In terms of assembly, homodimer. Mg(2+) is required as a cofactor.

It is found in the cytoplasm. It catalyses the reaction (7R,8S)-7,8-diammoniononanoate + CO2 + ATP = (4R,5S)-dethiobiotin + ADP + phosphate + 3 H(+). It functions in the pathway cofactor biosynthesis; biotin biosynthesis; biotin from 7,8-diaminononanoate: step 1/2. Functionally, catalyzes a mechanistically unusual reaction, the ATP-dependent insertion of CO2 between the N7 and N8 nitrogen atoms of 7,8-diaminopelargonic acid (DAPA, also called 7,8-diammoniononanoate) to form a ureido ring. The protein is ATP-dependent dethiobiotin synthetase BioD of Photobacterium profundum (strain SS9).